We begin with the raw amino-acid sequence, 156 residues long: ATP synthase subunit b 1 (156 aa).

A helical membrane pass occupies residues 5–27; sequence FTLISQAMAFAIFIWFTVRFVWP.

This sequence belongs to the ATPase B chain family. As to quaternary structure, F-type ATPases have 2 components, F(1) - the catalytic core - and F(0) - the membrane proton channel. F(1) has five subunits: alpha(3), beta(3), gamma(1), delta(1), epsilon(1). F(0) has three main subunits: a(1), b(2) and c(10-14). The alpha and beta chains form an alternating ring which encloses part of the gamma chain. F(1) is attached to F(0) by a central stalk formed by the gamma and epsilon chains, while a peripheral stalk is formed by the delta and b chains.

It is found in the cell inner membrane. Functionally, f(1)F(0) ATP synthase produces ATP from ADP in the presence of a proton or sodium gradient. F-type ATPases consist of two structural domains, F(1) containing the extramembraneous catalytic core and F(0) containing the membrane proton channel, linked together by a central stalk and a peripheral stalk. During catalysis, ATP synthesis in the catalytic domain of F(1) is coupled via a rotary mechanism of the central stalk subunits to proton translocation. In terms of biological role, component of the F(0) channel, it forms part of the peripheral stalk, linking F(1) to F(0). The protein is ATP synthase subunit b 1 of Nitrosospira multiformis (strain ATCC 25196 / NCIMB 11849 / C 71).